Here is a 279-residue protein sequence, read N- to C-terminus: Dehydrogenase/reductase SDR family member 4 (279 aa).

37-61 (LVTASTDGIGFAIARRLAQDGAHVV) lines the NADP(+) pocket. K93 carries the N6-acetyllysine; alternate modification. The residue at position 93 (K93) is an N6-succinyllysine; alternate. K106 carries the post-translational modification N6-acetyllysine. Residue S170 participates in substrate binding. Y183 (proton acceptor) is an active-site residue. K187 is a binding site for NADP(+). Residue S221 is modified to Phosphoserine. N6-succinyllysine is present on K235. The Peroxisomal targeting signal signature appears at 277 to 279 (SHL).

The protein belongs to the short-chain dehydrogenases/reductases (SDR) family. In terms of assembly, homotetramer.

The protein localises to the peroxisome. It catalyses the reaction a secondary alcohol + NADP(+) = a ketone + NADPH + H(+). The enzyme catalyses 3alpha-hydroxy-5beta-pregnan-20-one + NADP(+) = 5beta-pregnan-3,20-dione + NADPH + H(+). It carries out the reaction 5beta-dihydrotestosterone + NADPH + H(+) = 5beta-androstane-3alpha,17beta-diol + NADP(+). The catalysed reaction is all-trans-retinol + NADP(+) = all-trans-retinal + NADPH + H(+). It catalyses the reaction isatin + NADPH + H(+) = 3-hydroxyindolin-2-one + NADP(+). In terms of biological role, NADPH-dependent oxidoreductase which catalyzes the reduction of a variety of compounds bearing carbonyl groups including ketosteroids, alpha-dicarbonyl compounds, aldehydes, aromatic ketones and quinones. Reduces all-trans-retinal and 9-cis retinal. Reduces 3-ketosteroids and benzil into 3alpha-hydroxysteroids and S-benzoin, respectively, in contrast to the stereoselectivity of primates DHRS4s which produce 3beta-hydroxysteroids and R-benzoin. In the reverse reaction, catalyzes the NADP-dependent oxidation of 3alpha-hydroxysteroids and alcohol, but with much lower efficiency. Involved in the metabolism of 3alpha-hydroxysteroids, retinoid, isatin and xenobiotic carbonyl compounds. The protein is Dehydrogenase/reductase SDR family member 4 (DHRS4) of Bos taurus (Bovine).